Here is a 381-residue protein sequence, read N- to C-terminus: Heterogeneous nuclear rnp K-like protein 2 (381 aa).

A disordered region spans residues 1–34 (MSQFFEAATPVAIPTNNTNGGSSDAGSAATGGAP). Low complexity predominate over residues 15 to 33 (TNNTNGGSSDAGSAATGGA). 3 consecutive KH domains span residues 43–107 (TINH…IGDI), 156–221 (IGYV…LIEI), and 258–326 (NTRI…ESML). A disordered region spans residues 344–381 (LEAAEGDATVVTERSDSASFLEEKEEPQKNHDNKEEQS). 3 positions are modified to phosphoserine: Ser358, Ser360, and Ser362. A compositionally biased stretch (basic and acidic residues) spans 369-381 (EPQKNHDNKEEQS).

The protein belongs to the HEK2 family. As to quaternary structure, binds RNA. Phosphorylated by the plasma membrane-Anchored casein kinase YCK1. Phosphorylation at its C-terminus reduces its RNA-binding capacity.

The protein localises to the cytoplasm. It is found in the P-body. It localises to the nucleus. Its subcellular location is the chromosome. The protein resides in the telomere. In terms of biological role, RNA-binding protein involved in the correct localization of transcripts in the cell. RNA localization is a widespread mechanism for achieving localized protein synthesis. Required for the asymmetric localization to the daughter cell nucleus of the ASH1 transcript, coding for a specific repressor of transcription. Overexpression inhibits translation of the ASH1 transcript. Involved in the stability of transcripts, like the MTL1 mRNA. Involved in structural and functional organization of telomeric chromatin and regulates silencing at the HMR locus. In Saccharomyces cerevisiae (strain JAY291) (Baker's yeast), this protein is Heterogeneous nuclear rnp K-like protein 2 (HEK2).